Consider the following 515-residue polypeptide: ATP synthase subunit alpha (515 aa).

169 to 176 (GDRQTGKT) serves as a coordination point for ATP.

The protein belongs to the ATPase alpha/beta chains family. F-type ATPases have 2 components, CF(1) - the catalytic core - and CF(0) - the membrane proton channel. CF(1) has five subunits: alpha(3), beta(3), gamma(1), delta(1), epsilon(1). CF(0) has three main subunits: a(1), b(2) and c(9-12). The alpha and beta chains form an alternating ring which encloses part of the gamma chain. CF(1) is attached to CF(0) by a central stalk formed by the gamma and epsilon chains, while a peripheral stalk is formed by the delta and b chains.

It is found in the cell inner membrane. It catalyses the reaction ATP + H2O + 4 H(+)(in) = ADP + phosphate + 5 H(+)(out). Produces ATP from ADP in the presence of a proton gradient across the membrane. The alpha chain is a regulatory subunit. This is ATP synthase subunit alpha from Neisseria meningitidis serogroup C (strain 053442).